The chain runs to 272 residues: MNRFKKSKYVIIVFVTVLLVSALLATTYSSTIVTKLGDGISLVDRVVQKPFQWFDSVKSDLAHLTRTYNENESLKKQLYQLEVKSNEVESLKTENEQLRQLLDMKSKLQATKTLAADVIMRSPVSWKQELTLDAGRSKGASENMLAIANGGLIGSVSKVEENSTIVNLLTNTENADKISVKIQHGSTTIYGIIIGYDKENDVLKISQLNSNSDISAGDKVTTGGLGNFNVADIPVGEVVATTHSTDYLTREVTVKLSADTHNVDVIELVGNS.

The Cytoplasmic segment spans residues 1-8 (MNRFKKSK). Residues 9 to 29 (YVIIVFVTVLLVSALLATTYS) traverse the membrane as a helical segment. The Extracellular portion of the chain corresponds to 30–272 (STIVTKLGDG…VDVIELVGNS (243 aa)). The stretch at 64-112 (LTRTYNENESLKKQLYQLEVKSNEVESLKTENEQLRQLLDMKSKLQATK) forms a coiled coil.

Belongs to the MreC family. As to quaternary structure, homodimer. Interacts with a number of proteins in the elongasome, including PBP1a (pbpA), PBP1b, PBP2a, PBP2b (penA), StkP, MltG, MreD and RodZ.

Its subcellular location is the cell membrane. Involved in formation and maintenance of cell shape, probably part of the elongasome which synthesizes peripheral peptidoglycan (PG). This chain is Cell shape-determining protein MreC, found in Streptococcus pneumoniae (strain ATCC BAA-255 / R6).